An 86-amino-acid chain; its full sequence is Colicin-E2 immunity protein (86 aa).

It belongs to the colicins ColE2/ColE8/ColE9 and pyocins S1/S2 family.

This protein is able to protect a cell, which harbors the plasmid ColE2 encoding colicin E2, against colicin E2. In Escherichia coli, this protein is Colicin-E2 immunity protein (imm).